The chain runs to 260 residues: Imidazole glycerol phosphate synthase subunit HisF (260 aa).

Active-site residues include D12 and D131.

The protein belongs to the HisA/HisF family. In terms of assembly, heterodimer of HisH and HisF.

The protein resides in the cytoplasm. The enzyme catalyses 5-[(5-phospho-1-deoxy-D-ribulos-1-ylimino)methylamino]-1-(5-phospho-beta-D-ribosyl)imidazole-4-carboxamide + L-glutamine = D-erythro-1-(imidazol-4-yl)glycerol 3-phosphate + 5-amino-1-(5-phospho-beta-D-ribosyl)imidazole-4-carboxamide + L-glutamate + H(+). Its pathway is amino-acid biosynthesis; L-histidine biosynthesis; L-histidine from 5-phospho-alpha-D-ribose 1-diphosphate: step 5/9. In terms of biological role, IGPS catalyzes the conversion of PRFAR and glutamine to IGP, AICAR and glutamate. The HisF subunit catalyzes the cyclization activity that produces IGP and AICAR from PRFAR using the ammonia provided by the HisH subunit. In Corynebacterium jeikeium (strain K411), this protein is Imidazole glycerol phosphate synthase subunit HisF.